The sequence spans 560 residues: Membrane protein insertase YidC (560 aa).

6 consecutive transmembrane segments (helical) span residues asparagine 7–valine 27, alanine 334–phenylalanine 354, tyrosine 357–phenylalanine 377, leucine 431–isoleucine 451, leucine 476–leucine 496, and phenylalanine 522–tryptophan 542.

This sequence belongs to the OXA1/ALB3/YidC family. Type 1 subfamily. Interacts with the Sec translocase complex via SecD. Specifically interacts with transmembrane segments of nascent integral membrane proteins during membrane integration.

It is found in the cell inner membrane. Its function is as follows. Required for the insertion and/or proper folding and/or complex formation of integral membrane proteins into the membrane. Involved in integration of membrane proteins that insert both dependently and independently of the Sec translocase complex, as well as at least some lipoproteins. Aids folding of multispanning membrane proteins. This Rickettsia canadensis (strain McKiel) protein is Membrane protein insertase YidC.